Consider the following 676-residue polypeptide: Cysteine-rich receptor-like protein kinase 8 (676 aa).

The signal sequence occupies residues 1-34 (MYIVSMFGLAGLEALICFIFLFLFSFLTSFKASA). Residues 35–291 (QNPFYLNHDC…IPGKSGNSTV (257 aa)) lie on the Extracellular side of the membrane. 2 Gnk2-homologous domains span residues 38–142 (FYLN…HKNF) and 151–255 (ELIM…LYAF). N-linked (GlcNAc...) asparagine glycans are attached at residues asparagine 46, asparagine 53, asparagine 71, asparagine 114, asparagine 159, asparagine 187, asparagine 257, and asparagine 288. Residues 292–312 (LVVAIVVLAVLLFIALVGYCF) traverse the membrane as a helical segment. Topologically, residues 313–676 (LAQRTKKTFD…DELITDLYPR (364 aa)) are cytoplasmic. Residues 353–639 (FAESNKIGRG…TLPVPRQPGF (287 aa)) enclose the Protein kinase domain. ATP contacts are provided by residues 359-367 (IGRGGFGEV) and lysine 381. Tyrosine 426 carries the post-translational modification Phosphotyrosine. Residue aspartate 478 is the Proton acceptor of the active site. The residue at position 482 (serine 482) is a Phosphoserine. Residue threonine 518 is modified to Phosphothreonine. Position 526 is a phosphotyrosine (tyrosine 526). Positions 640-666 (FIQSSPVKDPTDSDQSTTTKSTPASID) are disordered. Residues 652 to 662 (SDQSTTTKSTP) show a composition bias toward low complexity.

It belongs to the protein kinase superfamily. Ser/Thr protein kinase family. CRK subfamily.

It is found in the membrane. It catalyses the reaction L-seryl-[protein] + ATP = O-phospho-L-seryl-[protein] + ADP + H(+). It carries out the reaction L-threonyl-[protein] + ATP = O-phospho-L-threonyl-[protein] + ADP + H(+). The protein is Cysteine-rich receptor-like protein kinase 8 (CRK8) of Arabidopsis thaliana (Mouse-ear cress).